A 98-amino-acid chain; its full sequence is NADH-ubiquinone oxidoreductase chain 4L (98 aa).

3 helical membrane passes run 1–21, 29–49, and 61–81; these read MSLTYMNILVAFVISLTGLLM, SLLCLEGMMLSLFVMVTITIL, and IILLVFAACEAALGLALLVMV.

The protein belongs to the complex I subunit 4L family. As to quaternary structure, core subunit of respiratory chain NADH dehydrogenase (Complex I) which is composed of 45 different subunits.

Its subcellular location is the mitochondrion inner membrane. The enzyme catalyses a ubiquinone + NADH + 5 H(+)(in) = a ubiquinol + NAD(+) + 4 H(+)(out). Functionally, core subunit of the mitochondrial membrane respiratory chain NADH dehydrogenase (Complex I) which catalyzes electron transfer from NADH through the respiratory chain, using ubiquinone as an electron acceptor. Part of the enzyme membrane arm which is embedded in the lipid bilayer and involved in proton translocation. This is NADH-ubiquinone oxidoreductase chain 4L (MT-ND4L) from Mystacina tuberculata (New Zealand lesser short-tailed bat).